The chain runs to 215 residues: Protein Syd (215 aa).

The protein belongs to the Syd family.

It is found in the cell inner membrane. In terms of biological role, interacts with the SecY protein in vivo. May bind preferentially to an uncomplexed state of SecY, thus functioning either as a chelating agent for excess SecY in the cell or as a regulatory factor that negatively controls the translocase function. The sequence is that of Protein Syd from Shewanella amazonensis (strain ATCC BAA-1098 / SB2B).